The sequence spans 563 residues: L-lactate permease (563 aa).

The next 14 membrane-spanning stretches (helical) occupy residues 14 to 34, 37 to 57, 73 to 93, 131 to 151, 157 to 177, 194 to 214, 220 to 240, 249 to 269, 304 to 324, 381 to 401, 419 to 439, 448 to 468, 506 to 526, and 542 to 562; these read LLLSALAALVPIIFFFWALAI, MKGYTAGLATLGIALIIAVLV, AVYGLLPIGWIIVTSVFLYKI, GAAGFGAPVAISAALLVGLGF, AGICLIANTAPVAFGAIGIPI, MVGRQLPFLSVFIPLYLIIIM, ALEIWPAILVSGVSFAVVQYL, LPDVLSALVSMAALAVFLKWW, IFKAWSPFLLLTAMISVWGIP, LGSAGTAILIAAVLSKFITAI, LPILTIASVVGFAYVTNSSGM, ALTGSMFTFFSPVLGWLGVFI, VTGKMISPQSIAVACAAVGLA, and FLLLLVCIITFLQHHVFSWMI.

Belongs to the lactate permease family.

Its subcellular location is the cell membrane. In terms of biological role, is the principal permease for the uptake of L-lactate in B.subtilis. The protein is L-lactate permease (lutP) of Bacillus subtilis (strain 168).